The primary structure comprises 853 residues: DNA mismatch repair protein MutS (853 aa).

614–621 contributes to the ATP binding site; sequence GPNMGGKS.

It belongs to the DNA mismatch repair MutS family.

Functionally, this protein is involved in the repair of mismatches in DNA. It is possible that it carries out the mismatch recognition step. This protein has a weak ATPase activity. The polypeptide is DNA mismatch repair protein MutS (Shigella dysenteriae serotype 1 (strain Sd197)).